Here is a 212-residue protein sequence, read N- to C-terminus: Glycerol-3-phosphate acyltransferase (212 aa).

5 helical membrane passes run 5–25, 53–73, 80–100, 112–132, and 138–158; these read ALGM…ILVC, VAAA…VWLA, PLYL…PVFF, FGAI…TWLL, and GYSS…VWWF.

This sequence belongs to the PlsY family. As to quaternary structure, probably interacts with PlsX.

It is found in the cell inner membrane. The enzyme catalyses an acyl phosphate + sn-glycerol 3-phosphate = a 1-acyl-sn-glycero-3-phosphate + phosphate. It participates in lipid metabolism; phospholipid metabolism. Its function is as follows. Catalyzes the transfer of an acyl group from acyl-phosphate (acyl-PO(4)) to glycerol-3-phosphate (G3P) to form lysophosphatidic acid (LPA). This enzyme utilizes acyl-phosphate as fatty acyl donor, but not acyl-CoA or acyl-ACP. In Serratia proteamaculans (strain 568), this protein is Glycerol-3-phosphate acyltransferase.